The primary structure comprises 165 residues: MERETQTYFFPDDGRIPNHPDFPLVVYQNALKDTGLAERIVTRHGWSNSWSGSVFPYHHYHSNTHEVLIALRREAVIQFGGEKGAAIPFKSGDAVVIPAGVGHKKLSSSPDFTVLGAYPGGVQYDMKTGKPNEREEAVKQIKQAALPANDPITGKREPLLEIWVK.

The Cupin type-1 domain maps to 28 to 139; sequence QNALKDTGLA…KPNEREEAVK (112 aa).

This is an uncharacterized protein from Bacillus subtilis (strain 168).